Consider the following 87-residue polypeptide: Monogrin 1 (87 aa).

A BPTI/Kunitz inhibitor domain is found at 8 to 62; the sequence is CGYLMMRGCRGDTTATRAWGFNYEEKKCQQETVICGTGGAPRNAFETKQDCDALC. 3 disulfides stabilise this stretch: C8-C62, C16-C42, and C35-C58. Residues 17 to 19 carry the Cell attachment site motif; the sequence is RGD.

Post-translationally, the N-terminus is blocked. Expressed in salivary glands.

Its subcellular location is the cytoplasmic vesicle. It localises to the secretory vesicle. The protein localises to the secreted. In terms of biological role, tick salivary platelet aggregation inhibitor that plays an important part in the anti-hemostatic strategy of ticks. Inhibits platelet aggregation induced by ADP (IC(50)~150 nM), collagen, and platelet activating factor (PAF). Acts by binding to platelet membrane glycoprotein IIb-IIIa (ITGA2B/ITGB3) in a metal ion dependent manner. Does not inhibit aggregation induced by ristocecin, an agonist that aggregates platelets independently from the glycoprotein IIb-IIIa (ITGA2B/ITGB3). In contrast to other tick platelet aggregation inhibitors, this protein does not protect ITGA2B/ITGB3 from dissociation under SDS condition, suggesting it may dissocate much faster than its orthologs. This chain is Monogrin 1, found in Argas monolakensis (Mono lake bird tick).